The chain runs to 696 residues: DNA ligase (696 aa).

Residues 36 to 40 (DAEYD), 85 to 86 (SL), and Glu-123 contribute to the NAD(+) site. Lys-125 serves as the catalytic N6-AMP-lysine intermediate. Arg-146, Glu-181, Lys-319, and Lys-343 together coordinate NAD(+). Zn(2+) contacts are provided by Cys-437, Cys-440, Cys-455, and Cys-461. Positions 618 to 696 (PEGTSLAGKT…EDGLKALLGL (79 aa)) constitute a BRCT domain.

It belongs to the NAD-dependent DNA ligase family. LigA subfamily. The cofactor is Mg(2+). Mn(2+) is required as a cofactor.

The catalysed reaction is NAD(+) + (deoxyribonucleotide)n-3'-hydroxyl + 5'-phospho-(deoxyribonucleotide)m = (deoxyribonucleotide)n+m + AMP + beta-nicotinamide D-nucleotide.. In terms of biological role, DNA ligase that catalyzes the formation of phosphodiester linkages between 5'-phosphoryl and 3'-hydroxyl groups in double-stranded DNA using NAD as a coenzyme and as the energy source for the reaction. It is essential for DNA replication and repair of damaged DNA. The polypeptide is DNA ligase (Bordetella parapertussis (strain 12822 / ATCC BAA-587 / NCTC 13253)).